Reading from the N-terminus, the 321-residue chain is Lipoyl synthase (321 aa).

[4Fe-4S] cluster is bound by residues cysteine 68, cysteine 73, cysteine 79, cysteine 94, cysteine 98, cysteine 101, and serine 308. A Radical SAM core domain is found at 80 to 297; it reads FNHGTATFMI…KEIALELGFT (218 aa).

It belongs to the radical SAM superfamily. Lipoyl synthase family. The cofactor is [4Fe-4S] cluster.

It localises to the cytoplasm. The catalysed reaction is [[Fe-S] cluster scaffold protein carrying a second [4Fe-4S](2+) cluster] + N(6)-octanoyl-L-lysyl-[protein] + 2 oxidized [2Fe-2S]-[ferredoxin] + 2 S-adenosyl-L-methionine + 4 H(+) = [[Fe-S] cluster scaffold protein] + N(6)-[(R)-dihydrolipoyl]-L-lysyl-[protein] + 4 Fe(3+) + 2 hydrogen sulfide + 2 5'-deoxyadenosine + 2 L-methionine + 2 reduced [2Fe-2S]-[ferredoxin]. It functions in the pathway protein modification; protein lipoylation via endogenous pathway; protein N(6)-(lipoyl)lysine from octanoyl-[acyl-carrier-protein]: step 2/2. Its function is as follows. Catalyzes the radical-mediated insertion of two sulfur atoms into the C-6 and C-8 positions of the octanoyl moiety bound to the lipoyl domains of lipoate-dependent enzymes, thereby converting the octanoylated domains into lipoylated derivatives. The protein is Lipoyl synthase of Vibrio cholerae serotype O1 (strain ATCC 39541 / Classical Ogawa 395 / O395).